Reading from the N-terminus, the 122-residue chain is Short coiled-coil protein (122 aa).

Residues Met-1 to Ser-26 form a disordered region. Positions Asn-43–Tyr-101 form a coiled coil.

This sequence belongs to the SCOC family. In terms of assembly, homodimer. Interacts with ARL1, ARL2 and ARL3. Directly interacts with FEZ1 and UVRAG. The interaction with UVRAG is reduced by amino acid starvation, but the complex is stabilized in the presence of FEZ1. Interacts with NRBF2.

It localises to the golgi apparatus membrane. The protein localises to the golgi apparatus. Its subcellular location is the trans-Golgi network. The protein resides in the cytoplasm. It is found in the cytosol. Positive regulator of amino acid starvation-induced autophagy. This chain is Short coiled-coil protein (Scoc), found in Rattus norvegicus (Rat).